The chain runs to 253 residues: Triosephosphate isomerase (253 aa).

Asparagine 9–lysine 11 is a binding site for substrate. Residue histidine 97 is the Electrophile of the active site. The active-site Proton acceptor is glutamate 169. Substrate-binding positions include glycine 175, serine 215, and glycine 236 to glycine 237.

Belongs to the triosephosphate isomerase family. Homodimer.

It localises to the cytoplasm. The catalysed reaction is D-glyceraldehyde 3-phosphate = dihydroxyacetone phosphate. The protein operates within carbohydrate biosynthesis; gluconeogenesis. It participates in carbohydrate degradation; glycolysis; D-glyceraldehyde 3-phosphate from glycerone phosphate: step 1/1. Functionally, involved in the gluconeogenesis. Catalyzes stereospecifically the conversion of dihydroxyacetone phosphate (DHAP) to D-glyceraldehyde-3-phosphate (G3P). This Staphylococcus aureus (strain NCTC 8325 / PS 47) protein is Triosephosphate isomerase.